The following is a 103-amino-acid chain: Large ribosomal subunit protein uL24 (103 aa).

Belongs to the universal ribosomal protein uL24 family. Part of the 50S ribosomal subunit.

One of two assembly initiator proteins, it binds directly to the 5'-end of the 23S rRNA, where it nucleates assembly of the 50S subunit. In terms of biological role, one of the proteins that surrounds the polypeptide exit tunnel on the outside of the subunit. In Actinobacillus pleuropneumoniae serotype 3 (strain JL03), this protein is Large ribosomal subunit protein uL24.